The following is a 346-amino-acid chain: Small ribosomal subunit biogenesis GTPase RsgA 1 (346 aa).

The 156-residue stretch at 93–248 (EEQLIAANFD…IIDTPGMREF (156 aa)) folds into the CP-type G domain. GTP is bound by residues 138-141 (TKAD) and 190-198 (GSSGVGKSS). Residues Cys-271, Cys-276, His-278, and Cys-284 each coordinate Zn(2+).

Belongs to the TRAFAC class YlqF/YawG GTPase family. RsgA subfamily. In terms of assembly, monomer. Associates with 30S ribosomal subunit, binds 16S rRNA. Zn(2+) serves as cofactor.

It localises to the cytoplasm. In terms of biological role, one of several proteins that assist in the late maturation steps of the functional core of the 30S ribosomal subunit. Helps release RbfA from mature subunits. May play a role in the assembly of ribosomal proteins into the subunit. Circularly permuted GTPase that catalyzes slow GTP hydrolysis, GTPase activity is stimulated by the 30S ribosomal subunit. The chain is Small ribosomal subunit biogenesis GTPase RsgA 1 from Listeria innocua serovar 6a (strain ATCC BAA-680 / CLIP 11262).